We begin with the raw amino-acid sequence, 235 residues long: DNA repair protein RecO (235 aa).

Belongs to the RecO family.

Involved in DNA repair and RecF pathway recombination. The protein is DNA repair protein RecO of Enterobacter sp. (strain 638).